The primary structure comprises 1245 residues: Trafficking protein particle complex II-specific subunit 130 homolog (1245 aa).

Disordered regions lie at residues Gly488 to Pro524 and His884 to Val903. Composition is skewed to low complexity over residues Ala495–Asn507 and Thr888–Thr898.

This sequence belongs to the TMEM1 family. As to quaternary structure, part of the multisubunit TRAPP (transport protein particle) II complex composed of BET3, BET5, TRS20, TRS23, TRS31, TRS33, TRS65, TRS85, TRS120 and TRS130.

The protein resides in the golgi apparatus. It is found in the trans-Golgi network. It localises to the early endosome. Its function is as follows. Specific subunit of the TRAPP II complex, a highly conserved vesicle tethering complex that is required for the proper transport of proteins in post-Golgi trafficking pathways to the growing cell plate in mitotic active cells. The polypeptide is Trafficking protein particle complex II-specific subunit 130 homolog (Oryza sativa subsp. japonica (Rice)).